Consider the following 449-residue polypeptide: Na(+)-translocating NADH-quinone reductase subunit A (449 aa).

The protein belongs to the NqrA family. In terms of assembly, composed of six subunits; NqrA, NqrB, NqrC, NqrD, NqrE and NqrF.

It catalyses the reaction a ubiquinone + n Na(+)(in) + NADH + H(+) = a ubiquinol + n Na(+)(out) + NAD(+). In terms of biological role, NQR complex catalyzes the reduction of ubiquinone-1 to ubiquinol by two successive reactions, coupled with the transport of Na(+) ions from the cytoplasm to the periplasm. NqrA to NqrE are probably involved in the second step, the conversion of ubisemiquinone to ubiquinol. This chain is Na(+)-translocating NADH-quinone reductase subunit A, found in Actinobacillus pleuropneumoniae serotype 5b (strain L20).